Consider the following 572-residue polypeptide: Formate--tetrahydrofolate ligase (572 aa).

65–72 serves as a coordination point for ATP; that stretch reads TPLGEGKT.

Belongs to the formate--tetrahydrofolate ligase family.

It carries out the reaction (6S)-5,6,7,8-tetrahydrofolate + formate + ATP = (6R)-10-formyltetrahydrofolate + ADP + phosphate. Its pathway is one-carbon metabolism; tetrahydrofolate interconversion. The sequence is that of Formate--tetrahydrofolate ligase from Chloroflexus aurantiacus (strain ATCC 29366 / DSM 635 / J-10-fl).